Reading from the N-terminus, the 251-residue chain is S-acyl fatty acid synthase thioesterase, medium chain (251 aa).

Active-site residues include Ser90 and His226.

The protein belongs to the thioesterase family.

It catalyses the reaction (9Z)-octadecenoyl-[ACP] + H2O = (9Z)-octadecenoate + holo-[ACP] + H(+). In terms of biological role, in fatty acid biosynthesis chain termination and release of the free fatty acid product is achieved by hydrolysis of the thio ester by a thioesterase I, a component of the fatty acid synthetase complex. The chain length of the released fatty acid is usually C16. However, in the mammary glands of non-ruminant mammals, and in the uropygial gland of certain waterfowl there exists a second thioesterase which releases medium-chain length fatty acids (C8 to C2). This chain is S-acyl fatty acid synthase thioesterase, medium chain, found in Anas platyrhynchos (Mallard).